Here is a 206-residue protein sequence, read N- to C-terminus: Erythropoietin (206 aa).

A signal peptide spans 1-40; the sequence is MCEPAPPKPTQSAWHSFPECPALLLLLSLLLLPLGLPVLG. 2 disulfide bridges follow: Cys47–Cys201 and Cys69–Cys73. A glycan (N-linked (GlcNAc...) asparagine) is linked at Asn64. 2 N-linked (GlcNAc...) asparagine glycosylation sites follow: Asn78 and Asn123.

It belongs to the EPO/TPO family. As to expression, produced by kidney or liver of adult mammals and by liver of fetal or neonatal mammals.

It is found in the secreted. Functionally, hormone involved in the regulation of erythrocyte proliferation and differentiation and the maintenance of a physiological level of circulating erythrocyte mass. Binds to EPOR leading to EPOR dimerization and JAK2 activation thereby activating specific downstream effectors, including STAT1 and STAT3. This Canis lupus familiaris (Dog) protein is Erythropoietin (EPO).